A 235-amino-acid polypeptide reads, in one-letter code: NAD(P)H-quinone oxidoreductase subunit K, chloroplastic (235 aa).

The [4Fe-4S] cluster site is built by Cys43, Cys44, Cys108, and Cys139.

This sequence belongs to the complex I 20 kDa subunit family. As to quaternary structure, NDH is composed of at least 16 different subunits, 5 of which are encoded in the nucleus. [4Fe-4S] cluster serves as cofactor.

The protein resides in the plastid. It localises to the chloroplast thylakoid membrane. The catalysed reaction is a plastoquinone + NADH + (n+1) H(+)(in) = a plastoquinol + NAD(+) + n H(+)(out). It carries out the reaction a plastoquinone + NADPH + (n+1) H(+)(in) = a plastoquinol + NADP(+) + n H(+)(out). In terms of biological role, NDH shuttles electrons from NAD(P)H:plastoquinone, via FMN and iron-sulfur (Fe-S) centers, to quinones in the photosynthetic chain and possibly in a chloroplast respiratory chain. The immediate electron acceptor for the enzyme in this species is believed to be plastoquinone. Couples the redox reaction to proton translocation, and thus conserves the redox energy in a proton gradient. The sequence is that of NAD(P)H-quinone oxidoreductase subunit K, chloroplastic from Ipomoea purpurea (Common morning glory).